A 91-amino-acid chain; its full sequence is Small ribosomal subunit protein uS19 (91 aa).

Belongs to the universal ribosomal protein uS19 family.

Functionally, protein S19 forms a complex with S13 that binds strongly to the 16S ribosomal RNA. The chain is Small ribosomal subunit protein uS19 from Synechococcus sp. (strain CC9311).